The following is a 281-amino-acid chain: 2,3,4,5-tetrahydropyridine-2,6-dicarboxylate N-succinyltransferase (281 aa).

Positions 108 and 145 each coordinate substrate.

It belongs to the transferase hexapeptide repeat family. As to quaternary structure, homotrimer.

The protein resides in the cytoplasm. It carries out the reaction (S)-2,3,4,5-tetrahydrodipicolinate + succinyl-CoA + H2O = (S)-2-succinylamino-6-oxoheptanedioate + CoA. It participates in amino-acid biosynthesis; L-lysine biosynthesis via DAP pathway; LL-2,6-diaminopimelate from (S)-tetrahydrodipicolinate (succinylase route): step 1/3. The sequence is that of 2,3,4,5-tetrahydropyridine-2,6-dicarboxylate N-succinyltransferase from Parvibaculum lavamentivorans (strain DS-1 / DSM 13023 / NCIMB 13966).